Consider the following 248-residue polypeptide: Probable pyridoxal 5'-phosphate synthase subunit pdx2 (248 aa).

An L-glutamine-binding site is contributed by 70-72 (GES). C106 acts as the Nucleophile in catalysis. L-glutamine is bound by residues R136 and 174 to 175 (IR). Residues H221 and E223 each act as charge relay system in the active site.

It belongs to the glutaminase PdxT/SNO family.

It catalyses the reaction aldehydo-D-ribose 5-phosphate + D-glyceraldehyde 3-phosphate + L-glutamine = pyridoxal 5'-phosphate + L-glutamate + phosphate + 3 H2O + H(+). It carries out the reaction L-glutamine + H2O = L-glutamate + NH4(+). It functions in the pathway cofactor biosynthesis; pyridoxal 5'-phosphate biosynthesis. Its function is as follows. Catalyzes the hydrolysis of glutamine to glutamate and ammonia as part of the biosynthesis of pyridoxal 5'-phosphate. The resulting ammonia molecule is channeled to the active site of pdx1. This Dictyostelium discoideum (Social amoeba) protein is Probable pyridoxal 5'-phosphate synthase subunit pdx2.